The chain runs to 345 residues: S-adenosylmethionine:tRNA ribosyltransferase-isomerase (345 aa).

The protein belongs to the QueA family. As to quaternary structure, monomer.

The protein resides in the cytoplasm. It carries out the reaction 7-aminomethyl-7-carbaguanosine(34) in tRNA + S-adenosyl-L-methionine = epoxyqueuosine(34) in tRNA + adenine + L-methionine + 2 H(+). The protein operates within tRNA modification; tRNA-queuosine biosynthesis. In terms of biological role, transfers and isomerizes the ribose moiety from AdoMet to the 7-aminomethyl group of 7-deazaguanine (preQ1-tRNA) to give epoxyqueuosine (oQ-tRNA). This chain is S-adenosylmethionine:tRNA ribosyltransferase-isomerase, found in Helicobacter pylori (strain Shi470).